Consider the following 157-residue polypeptide: UPF0262 protein RHECIAT_CH0000657 (157 aa).

The protein belongs to the UPF0262 family.

The chain is UPF0262 protein RHECIAT_CH0000657 from Rhizobium etli (strain CIAT 652).